The primary structure comprises 158 residues: MDIMHGDLRRNGSNQSVPSRHGWIDMEALSPLADQSMPGEWSVGLCDCFGDLHTCCLTLWCPCVTFGRTAEIVDRGSTCCMSGTLYYLLSTIGWQWLYGCAKRSSMRSQYSLRESPCMDCCVHFWCGPCALCQEYTELQKRGFHMAKGISSPPHLPTV.

The next 2 helical transmembrane spans lie at F49 to G67 and T78 to W94.

This sequence belongs to the cornifelin family.

It is found in the membrane. In Zea mays (Maize), this protein is Cell number regulator 11 (CNR11).